A 198-amino-acid polypeptide reads, in one-letter code: HTH-type transcriptional regulator BetI (198 aa).

Positions 8–68 constitute an HTH tetR-type domain; the sequence is PLRRRELIDA…ATMRHLLREL (61 aa). The H-T-H motif DNA-binding region spans 31–50; that stretch reads TVAQIAHEAGVSPALAHHYF.

It functions in the pathway amine and polyamine biosynthesis; betaine biosynthesis via choline pathway [regulation]. In terms of biological role, repressor involved in the biosynthesis of the osmoprotectant glycine betaine. It represses transcription of the choline transporter BetT and the genes of BetAB involved in the synthesis of glycine betaine. The polypeptide is HTH-type transcriptional regulator BetI (Brucella melitensis biotype 2 (strain ATCC 23457)).